Here is a 78-residue protein sequence, read N- to C-terminus: Large ribosomal subunit protein bL28 (78 aa).

This sequence belongs to the bacterial ribosomal protein bL28 family.

The polypeptide is Large ribosomal subunit protein bL28 (Francisella tularensis subsp. holarctica (strain FTNF002-00 / FTA)).